Consider the following 309-residue polypeptide: Taste receptor type 2 member 43 (309 aa).

Position 1 (M1) is a topological domain, extracellular. The chain crosses the membrane as a helical span at residues 2-22 (ITFLPIIFSSLVVVTFVIGNF). The Cytoplasmic portion of the chain corresponds to 23–46 (ANGFIALVNSIEWFKRQKISFADQ). The chain crosses the membrane as a helical span at residues 47–67 (ILTALAVSRVGLLWVLLLNWY). Over 68 to 86 (STVLNPAFNSVEVRTTAYN) the chain is Extracellular. The helical transmembrane segment at 87–107 (IWAVINHFSNWLATTLSIFYL) threads the bilayer. The Cytoplasmic segment spans residues 108 to 126 (LKIANFSNFIFLHLKRRVK). A helical transmembrane segment spans residues 127–147 (SVILVMLLGPLLFLACHLFVI). Residues 148–178 (NMNEIVRTKEFEGNMTWKIKLKSAMYFSNMT) lie on the Extracellular side of the membrane. 2 N-linked (GlcNAc...) asparagine glycosylation sites follow: N161 and N176. A helical membrane pass occupies residues 179–199 (VTMVANLVPFTLTLLSFMLLI). At 200–229 (CSLCKHLKKMQLHGKGSQDPSTKVHIKALQ) the chain is on the cytoplasmic side. Residues 230–250 (TVISFLLLCAIYFLSIMISVW) traverse the membrane as a helical segment. Residues 251-259 (SFGSLENKP) lie on the Extracellular side of the membrane. The chain crosses the membrane as a helical span at residues 260–280 (VFMFCKAIRFSYPSIHPFILI). Residues 281–309 (WGNKKLKQTFLSVFWQMRYWVKGEKTSSP) are Cytoplasmic-facing.

Belongs to the G-protein coupled receptor T2R family. In terms of tissue distribution, expressed in subsets of taste receptor cells of the tongue and exclusively in gustducin-positive cells. Expressed in airway epithelia.

The protein resides in the membrane. Its subcellular location is the cell projection. It localises to the cilium membrane. Gustducin-coupled receptor immplicated in the perception of bitter compounds in the oral cavity and the gastrointestinal tract. Signals through PLCB2 and the calcium-regulated cation channel TRPM5. Activated by the sulfonyl amide sweeteners saccharin and acesulfame K. In airway epithelial cells, binding of bitter compounds increases the intracellular calcium ion concentration and stimulates ciliary beat frequency. May act as chemosensory receptors in airway epithelial cells to detect and eliminate potential noxious agents from the airways. The sequence is that of Taste receptor type 2 member 43 (TAS2R43) from Homo sapiens (Human).